Reading from the N-terminus, the 106-residue chain is ATP-dependent Clp protease adapter protein ClpS (106 aa).

Residues 1–14 (MTDKAGDWQEHGPQ) show a composition bias toward basic and acidic residues. The interval 1-21 (MTDKAGDWQEHGPQVEEAPPQ) is disordered.

This sequence belongs to the ClpS family. In terms of assembly, binds to the N-terminal domain of the chaperone ClpA.

Functionally, involved in the modulation of the specificity of the ClpAP-mediated ATP-dependent protein degradation. The polypeptide is ATP-dependent Clp protease adapter protein ClpS (Alkalilimnicola ehrlichii (strain ATCC BAA-1101 / DSM 17681 / MLHE-1)).